Consider the following 906-residue polypeptide: MVGLGVFARKFFGSAYERRLKALRQKVAQINALEEQFQKLNDTQLCQKTDEFRKRLTEGETVDLLLPEAFATVREAAKRVYDMRPFDVQLIGGMVLHNCGIAEMRTGEGKTLMATLPIYLNALEGKGVHVVTVNDYLARRDAETMGKIFSFLGLTTGVILHDLDSDARRSAYACDITYATNNELGFDYLRDNMAFDRSQMVQRGHHYAIVDEVDSILIDEARTPLIISGPLEDRTDFYNLIDTFIPSLTPEDYEIDEKQKTITFTEVGTEKIEKMLEQAGHLKGKSLYDIENVAIIHHINNALKAHKLFVRDKDYIVRNNEIVIIDEFTGRMMPGRRYSEGLHQALEAKEHVAIQPENQTLASITFQNYFRMYRKLSGMTGTATTEAEEFSNIYDLEVVEIPTNLPIQRRDEDDEIYRTAEEKYRAIVRDIRQAHEKGQPILVGTTSIEKSEQLAERLRKEGITDFRVLNARYHEQEAYIIAQAGVPGALTIATNMAGRGTDIQLGGNVEMRIRQELQDMPEGIERTAKIEEIKKDVKQLKEKALAAGGFYVIATERHESRRIDNQLRGRSGRQGDPGRSKFFLSLQDDLMRIFGSNRMDGMLQKLGLKENEAITHPWINKALEKAQKKVEARNFEIRKNLLKYDDVMNDQRKVIFEQRMEIMNADDLIEMILEMRNEVIEDLVETYIPSETYSEKWDVKALQEEIHHLFNLELPVEEWAKEDGIAEEQILERISNAVTKLENERAERYSPEILAYFHKAVLLETIDTLWREHLVNLDHLRSVVGFRGYAQRDPLNEYKTESFELFQAMLRNLRRIVTSKLMRFEIIQQPTESLIPEQVDGNDSALNDQRKGNDSPLWMQIQENRVVVNPKDRNPKDSTTWGKVGRNERCPCGSEKKYKHCHGAFV.

Residues Q89, 107–111 (GEGKT), and D502 contribute to the ATP site. Residues C890, C892, C901, and H902 each coordinate Zn(2+).

This sequence belongs to the SecA family. In terms of assembly, monomer and homodimer. Part of the essential Sec protein translocation apparatus which comprises SecA, SecYEG and auxiliary proteins SecDF-YajC and YidC. It depends on Zn(2+) as a cofactor.

Its subcellular location is the cell inner membrane. The protein resides in the cytoplasm. It carries out the reaction ATP + H2O + cellular proteinSide 1 = ADP + phosphate + cellular proteinSide 2.. Its function is as follows. Part of the Sec protein translocase complex. Interacts with the SecYEG preprotein conducting channel. Has a central role in coupling the hydrolysis of ATP to the transfer of proteins into and across the cell membrane, serving both as a receptor for the preprotein-SecB complex and as an ATP-driven molecular motor driving the stepwise translocation of polypeptide chains across the membrane. The sequence is that of Protein translocase subunit SecA from Bartonella quintana (strain Toulouse) (Rochalimaea quintana).